The chain runs to 205 residues: Endoplasmic reticulum membrane protein complex subunit 10 (205 aa).

The first 17 residues, 1–17 (MLVRLLRVILLASMVFC), serve as a signal peptide directing secretion. Over 18 to 172 (ADILQLSYSD…VKEVSWFQKN (155 aa)) the chain is Lumenal. Residue asparagine 47 is glycosylated (N-linked (GlcNAc...) asparagine). A helical membrane pass occupies residues 173 to 190 (WKMLLLGLLIYNFVAGSA). Topologically, residues 191-205 (KKQQQGGAGADQKTE) are cytoplasmic.

Component of the ER membrane protein complex (EMC).

Its subcellular location is the endoplasmic reticulum membrane. In terms of biological role, part of the endoplasmic reticulum membrane protein complex (EMC) that enables the energy-independent insertion into endoplasmic reticulum membranes of newly synthesized membrane proteins. Preferentially accommodates proteins with transmembrane domains that are weakly hydrophobic or contain destabilizing features such as charged and aromatic residues. Involved in the cotranslational insertion of multi-pass membrane proteins in which stop-transfer membrane-anchor sequences become ER membrane spanning helices. It is also required for the post-translational insertion of tail-anchored/TA proteins in endoplasmic reticulum membranes. By mediating the proper cotranslational insertion of N-terminal transmembrane domains in an N-exo topology, with translocated N-terminus in the lumen of the ER, controls the topology of multi-pass membrane proteins. The chain is Endoplasmic reticulum membrane protein complex subunit 10 from Saccharomyces cerevisiae (strain ATCC 204508 / S288c) (Baker's yeast).